The primary structure comprises 352 residues: Phosphoribosylformylglycinamidine cyclo-ligase (352 aa).

The protein belongs to the AIR synthase family.

The protein resides in the cytoplasm. It catalyses the reaction 2-formamido-N(1)-(5-O-phospho-beta-D-ribosyl)acetamidine + ATP = 5-amino-1-(5-phospho-beta-D-ribosyl)imidazole + ADP + phosphate + H(+). It functions in the pathway purine metabolism; IMP biosynthesis via de novo pathway; 5-amino-1-(5-phospho-D-ribosyl)imidazole from N(2)-formyl-N(1)-(5-phospho-D-ribosyl)glycinamide: step 2/2. This chain is Phosphoribosylformylglycinamidine cyclo-ligase, found in Azoarcus sp. (strain BH72).